We begin with the raw amino-acid sequence, 130 residues long: uncharacterized protein (130 aa).

Residues 15–31 traverse the membrane as a helical segment; that stretch reads LYLCPAIIRLSSVCTLA.

It is found in the membrane. This is an uncharacterized protein from Saccharomyces cerevisiae (strain ATCC 204508 / S288c) (Baker's yeast).